The sequence spans 155 residues: 6,7-dimethyl-8-ribityllumazine synthase (155 aa).

Residues Phe-24, Ala-58–Glu-60, and Ala-82–Ile-84 each bind 5-amino-6-(D-ribitylamino)uracil. Ser-87–Thr-88 is a binding site for (2S)-2-hydroxy-3-oxobutyl phosphate. Residue His-90 is the Proton donor of the active site. Phe-115 provides a ligand contact to 5-amino-6-(D-ribitylamino)uracil. Residue Arg-129 participates in (2S)-2-hydroxy-3-oxobutyl phosphate binding.

It belongs to the DMRL synthase family.

The catalysed reaction is (2S)-2-hydroxy-3-oxobutyl phosphate + 5-amino-6-(D-ribitylamino)uracil = 6,7-dimethyl-8-(1-D-ribityl)lumazine + phosphate + 2 H2O + H(+). It functions in the pathway cofactor biosynthesis; riboflavin biosynthesis; riboflavin from 2-hydroxy-3-oxobutyl phosphate and 5-amino-6-(D-ribitylamino)uracil: step 1/2. Its function is as follows. Catalyzes the formation of 6,7-dimethyl-8-ribityllumazine by condensation of 5-amino-6-(D-ribitylamino)uracil with 3,4-dihydroxy-2-butanone 4-phosphate. This is the penultimate step in the biosynthesis of riboflavin. This chain is 6,7-dimethyl-8-ribityllumazine synthase, found in Chlorobium phaeovibrioides (strain DSM 265 / 1930) (Prosthecochloris vibrioformis (strain DSM 265)).